Here is a 434-residue protein sequence, read N- to C-terminus: 3-ketoacyl-CoA thiolase A, peroxisomal (434 aa).

The transit peptide at 1 to 36 (MSESVGRTSAMHRLQVVLGHLAGRPESSSALQAAPC) directs the protein to the peroxisome. Residues 11-36 (MHRLQVVLGHLAGRPESSSALQAAPC) are PTS2-type peroxisomal targeting signal. Cys133 acts as the Acyl-thioester intermediate in catalysis. N6-acetyllysine is present on residues Lys183 and Lys244. Catalysis depends on proton acceptor residues His387 and Cys418.

This sequence belongs to the thiolase-like superfamily. Thiolase family. As to quaternary structure, homodimer. Interacts (via PTS2-type peroxisomal targeting signal region) with PEX7; leading to its translocation into peroxisomes.

It is found in the peroxisome. The catalysed reaction is an acyl-CoA + acetyl-CoA = a 3-oxoacyl-CoA + CoA. It catalyses the reaction 2 acetyl-CoA = acetoacetyl-CoA + CoA. It carries out the reaction tetradecanoyl-CoA + acetyl-CoA = 3-oxohexadecanoyl-CoA + CoA. The enzyme catalyses hexanoyl-CoA + acetyl-CoA = 3-oxooctanoyl-CoA + CoA. The catalysed reaction is 3-oxohexadecanedioyl-CoA + CoA = tetradecanedioyl-CoA + acetyl-CoA. It catalyses the reaction 3-oxo-(6Z,9Z,12Z,15Z,18Z,21Z)-tetracosahexaenoyl-CoA + CoA = (4Z,7Z,10Z,13Z,16Z,19Z)-docosahexaenoyl-CoA + acetyl-CoA. It participates in lipid metabolism; peroxisomal fatty acid beta-oxidation. Functionally, responsible for the thiolytic cleavage of straight chain 3-keto fatty acyl-CoAs (3-oxoacyl-CoAs). Plays an important role in fatty acid peroxisomal beta-oxidation. Catalyzes the cleavage of short, medium, long, and very long straight chain 3-oxoacyl-CoAs. Medium chain straight 3-oxoacyl-CoAs are preferred substrates. This chain is 3-ketoacyl-CoA thiolase A, peroxisomal, found in Rattus norvegicus (Rat).